A 269-amino-acid chain; its full sequence is Thiazole synthase (269 aa).

The Schiff-base intermediate with DXP role is filled by Lys-109. 1-deoxy-D-xylulose 5-phosphate is bound by residues Gly-170, 196 to 197 (AG), and 218 to 219 (NT).

It belongs to the ThiG family. Homotetramer. Forms heterodimers with either ThiH or ThiS.

The protein resides in the plastid. It is found in the chloroplast. It carries out the reaction [ThiS sulfur-carrier protein]-C-terminal-Gly-aminoethanethioate + 2-iminoacetate + 1-deoxy-D-xylulose 5-phosphate = [ThiS sulfur-carrier protein]-C-terminal Gly-Gly + 2-[(2R,5Z)-2-carboxy-4-methylthiazol-5(2H)-ylidene]ethyl phosphate + 2 H2O + H(+). It functions in the pathway cofactor biosynthesis; thiamine diphosphate biosynthesis. In terms of biological role, catalyzes the rearrangement of 1-deoxy-D-xylulose 5-phosphate (DXP) to produce the thiazole phosphate moiety of thiamine. Sulfur is provided by the thiocarboxylate moiety of the carrier protein ThiS. In vitro, sulfur can be provided by H(2)S. The chain is Thiazole synthase from Thalassiosira pseudonana (Marine diatom).